Here is a 601-residue protein sequence, read N- to C-terminus: Probable Xaa-Pro aminopeptidase P (601 aa).

D398, D409, E507, and E521 together coordinate Mn(2+).

It belongs to the peptidase M24B family. Mn(2+) serves as cofactor.

It catalyses the reaction Release of any N-terminal amino acid, including proline, that is linked to proline, even from a dipeptide or tripeptide.. In terms of biological role, catalyzes the removal of a penultimate prolyl residue from the N-termini of peptides. This is Probable Xaa-Pro aminopeptidase P (ampp) from Sclerotinia sclerotiorum (strain ATCC 18683 / 1980 / Ss-1) (White mold).